A 331-amino-acid polypeptide reads, in one-letter code: Zinc finger CW-type PWWP domain protein 2 homolog (331 aa).

The segment at 9 to 64 adopts a CW-type zinc-finger fold; sequence EFVHRTWVQCENESCLKWRLLSPAAAAAVNPSEPWYCFMNTDPSYSSCSVSEEDFP. Cys18, Cys23, Cys45, and Cys56 together coordinate Zn(2+). In terms of domain architecture, PWWP spans 83 to 147; it reads LGSLVLVKLR…AAFVGHFSLT (65 aa). Residues 264-295 are disordered; the sequence is IQEPTAREDESQGEQLSQCSPESPTGSPFQSY. A compositionally biased stretch (polar residues) spans 276 to 293; it reads GEQLSQCSPESPTGSPFQ.

Functionally, histone methylation reader which binds to non-methylated (H3K4me0), monomethylated (H3K4me1), dimethylated (H3K4me2) and trimethylated (H3K4me3) 'Lys-4' on histone H3. The order of binding preference is H3K4me3 &gt; H3K4me2 &gt; H3K4me1 &gt; H3K4me0. In Mus musculus (Mouse), this protein is Zinc finger CW-type PWWP domain protein 2 homolog (Zcwpw2).